The sequence spans 247 residues: Adenylate kinase (247 aa).

42 to 47 (GAGKGT) provides a ligand contact to ATP. Residues 62-91 (ATGDMLRAQVTAKTELGVQAKKIMDQGGLV) form an NMP region. AMP-binding positions include Thr-63, Arg-68, 89–91 (GLV), 118–121 (GFPR), and Gln-125. The tract at residues 159–196 (GRLVHPASGRSYHKLFNPPKKEMTDDQTGEPLVQRSDD) is LID. ATP-binding positions include Arg-160 and 169–170 (SY). Positions 169-191 (SYHKLFNPPKKEMTDDQTGEPLV) are disordered. Positions 193 and 204 each coordinate AMP. Residue Gln-232 participates in ATP binding.

Belongs to the adenylate kinase family. AK2 subfamily. In terms of assembly, monomer.

Its subcellular location is the cytoplasm. The protein resides in the cytosol. It localises to the mitochondrion intermembrane space. The catalysed reaction is AMP + ATP = 2 ADP. Functionally, catalyzes the reversible transfer of the terminal phosphate group between ATP and AMP. Plays an important role in cellular energy homeostasis and in adenine nucleotide metabolism. Adenylate kinase activity is critical for regulation of the phosphate utilization and the AMP de novo biosynthesis pathways. The sequence is that of Adenylate kinase from Meyerozyma guilliermondii (strain ATCC 6260 / CBS 566 / DSM 6381 / JCM 1539 / NBRC 10279 / NRRL Y-324) (Yeast).